The primary structure comprises 95 residues: Integration host factor subunit beta (95 aa).

Residues 59–95 are disordered; it reads RVGRNPKTGQSVRLDGKFVPHFKPGKELRDRVNEDES. The segment covering 72 to 95 has biased composition (basic and acidic residues); the sequence is LDGKFVPHFKPGKELRDRVNEDES.

The protein belongs to the bacterial histone-like protein family. In terms of assembly, heterodimer of an alpha and a beta chain.

This protein is one of the two subunits of integration host factor, a specific DNA-binding protein that functions in genetic recombination as well as in transcriptional and translational control. The sequence is that of Integration host factor subunit beta from Ectopseudomonas mendocina (strain ymp) (Pseudomonas mendocina).